Here is a 622-residue protein sequence, read N- to C-terminus: Low affinity potassium transport system protein Kup (622 aa).

12 consecutive transmembrane segments (helical) span residues leucine 9–leucine 29, valine 49–leucine 69, valine 103–isoleucine 123, proline 137–isoleucine 157, valine 165–leucine 185, valine 213–alanine 233, tryptophan 247–leucine 267, proline 276–alanine 296, isoleucine 337–phenylalanine 357, leucine 363–threonine 383, phenylalanine 396–leucine 416, and leucine 419–threonine 439.

It belongs to the HAK/KUP transporter (TC 2.A.72) family.

Its subcellular location is the cell inner membrane. The catalysed reaction is K(+)(in) + H(+)(in) = K(+)(out) + H(+)(out). Functionally, responsible for the low-affinity transport of potassium into the cell. Likely operates as a K(+):H(+) symporter. This chain is Low affinity potassium transport system protein Kup, found in Shigella sonnei (strain Ss046).